The primary structure comprises 252 residues: Protein IRON-RELATED TRANSCRIPTION FACTOR 3 (252 aa).

Residues 36 to 49 (PRKVHKSEREKLKR) are basic motif. In terms of domain architecture, bHLH spans 36-86 (PRKVHKSEREKLKRGHLNDLFGELGNMLEADRQSNGKACILTDTTRILRDL). A helix-loop-helix motif region spans residues 50–86 (GHLNDLFGELGNMLEADRQSNGKACILTDTTRILRDL). A coiled-coil region spans residues 76–131 (LTDTTRILRDLLSQVKSLRQENSTLQNESNYVTMERNELQDENGALRSEISDLQNE). Residues 135–252 (RATGSPGWGH…GLPRMEDEQM (118 aa)) are disordered. Low complexity predominate over residues 162 to 176 (PSQQPMQPSPMTTST). The segment covering 208–219 (PAEDPEPSEDQE) has biased composition (acidic residues).

This sequence belongs to the bHLH protein family.

The protein resides in the nucleus. Its function is as follows. Transcription factor that acts as a negative regulator of the iron deficiency response. Suppresses the induction of iron deficiency responsive genes, such as NAS1, NAS2, IRO2, IRT1, YSL15, and NRAMP1. The polypeptide is Protein IRON-RELATED TRANSCRIPTION FACTOR 3 (Oryza sativa subsp. japonica (Rice)).